The following is a 476-amino-acid chain: Aspartyl/glutamyl-tRNA(Asn/Gln) amidotransferase subunit B (476 aa).

It belongs to the GatB/GatE family. GatB subfamily. As to quaternary structure, heterotrimer of A, B and C subunits.

The enzyme catalyses L-glutamyl-tRNA(Gln) + L-glutamine + ATP + H2O = L-glutaminyl-tRNA(Gln) + L-glutamate + ADP + phosphate + H(+). The catalysed reaction is L-aspartyl-tRNA(Asn) + L-glutamine + ATP + H2O = L-asparaginyl-tRNA(Asn) + L-glutamate + ADP + phosphate + 2 H(+). Allows the formation of correctly charged Asn-tRNA(Asn) or Gln-tRNA(Gln) through the transamidation of misacylated Asp-tRNA(Asn) or Glu-tRNA(Gln) in organisms which lack either or both of asparaginyl-tRNA or glutaminyl-tRNA synthetases. The reaction takes place in the presence of glutamine and ATP through an activated phospho-Asp-tRNA(Asn) or phospho-Glu-tRNA(Gln). This chain is Aspartyl/glutamyl-tRNA(Asn/Gln) amidotransferase subunit B, found in Listeria monocytogenes serotype 4b (strain CLIP80459).